Here is a 384-residue protein sequence, read N- to C-terminus: Neuropeptide Y receptor type 1 (384 aa).

The Extracellular portion of the chain corresponds to 1 to 44 (MNSTLFSQVENHSVHSNFSEKNAQLLAFENDDCHLPLAMIFTLA). Asparagine 2, asparagine 11, and asparagine 17 each carry an N-linked (GlcNAc...) asparagine glycan. A helical membrane pass occupies residues 45–65 (LAYGAVIILGVSGNLALIIII). The Cytoplasmic portion of the chain corresponds to 66–76 (LKQKEMRNVTN). Residues 77-97 (ILIVNLSFSDLLVAIMCLPFT) traverse the membrane as a helical segment. At 98 to 116 (FVYTLMDHWVFGEAMCKLN) the chain is on the extracellular side. Cysteine 113 and cysteine 198 are oxidised to a cystine. Residues 117–137 (PFVQCVSITVSIFSLVLIAVE) traverse the membrane as a helical segment. At 138 to 154 (RHQLIINPRGWRPNNRH) the chain is on the cytoplasmic side. A helical transmembrane segment spans residues 155 to 175 (AYVGIAVIWVLAVASSLPFLI). Over 176–211 (YQVMTDEPFQNVTLDAYKDKYVCFDQFPSDSHRLSY) the chain is Extracellular. The helical transmembrane segment at 212–232 (TTLLLVLQYFGPLCFIFICYF) threads the bilayer. At 233 to 260 (KIYIRLKRRNNMMDKMRDNKYRSSETKR) the chain is on the cytoplasmic side. Residues 261-281 (INIMLLSIVVAFAVCWLPLTI) form a helical membrane-spanning segment. At 282–299 (FNTVFDWNHQIIATCNHN) the chain is on the extracellular side. The helical transmembrane segment at 300–320 (LLFLLCHLTAMISTCVNPIFY) threads the bilayer. Residues 321–384 (GFLNKNFQRD…INNNDDNEKI (64 aa)) lie on the Cytoplasmic side of the membrane. Residue cysteine 338 is the site of S-palmitoyl cysteine attachment. Position 368 is a phosphoserine (serine 368).

Belongs to the G-protein coupled receptor 1 family.

The protein resides in the cell membrane. Its function is as follows. Receptor for neuropeptide Y and peptide YY. The rank order of affinity of this receptor for pancreatic polypeptides is NPY &gt; [Pro-34] PYY, PYY and [Leu-31, Pro-34] NPY &gt; NPY (2-36) &gt; [Ile-31, Gln-34] PP and PYY (3-36) &gt; PP &gt; NPY free acid. The sequence is that of Neuropeptide Y receptor type 1 (NPY1R) from Homo sapiens (Human).